Consider the following 274-residue polypeptide: Kit ligand (274 aa).

The signal sequence occupies residues 1–25 (MKKTQTWIITCIYLQLLLFNPLVRT). Pyrrolidone carboxylic acid is present on Gln26. Residues 26-215 (QGICRNRVTD…SDSIEDSSLQ (190 aa)) lie on the Extracellular side of the membrane. 2 disulfides stabilise this stretch: Cys29-Cys114 and Cys68-Cys164. N-linked (GlcNAc...) asparagine glycans are attached at residues Asn90, Asn97, Asn145, and Asn196. A helical transmembrane segment spans residues 216–238 (WAAVALPAFFSLVIGFAFGALYW). Topologically, residues 239 to 274 (KKKQPNLTRTVENIQINEEDNEISMLQEKEREFQEV) are cytoplasmic.

Belongs to the SCF family. As to quaternary structure, homodimer, non-covalently linked. Heterotetramer with KIT, binding two KIT molecules; thereby mediates KIT dimerization and subsequent activation by autophosphorylation. In terms of processing, a soluble form is produced by proteolytic processing of the extracellular domain.

The protein localises to the cytoplasm. It is found in the cytoskeleton. The protein resides in the cell membrane. It localises to the cell projection. Its subcellular location is the lamellipodium. The protein localises to the filopodium. It is found in the secreted. Its function is as follows. Ligand for the receptor-type protein-tyrosine kinase KIT. Plays an essential role in the regulation of cell survival and proliferation, hematopoiesis, stem cell maintenance, gametogenesis, mast cell development, migration and function, and in melanogenesis. KITLG/SCF binding can activate several signaling pathways. Promotes phosphorylation of PIK3R1, the regulatory subunit of phosphatidylinositol 3-kinase, and subsequent activation of the kinase AKT1. KITLG/SCF and KIT also transmit signals via GRB2 and activation of RAS, RAF1 and the MAP kinases MAPK1/ERK2 and/or MAPK3/ERK1. KITLG/SCF and KIT promote activation of STAT family members STAT1, STAT3 and STAT5. KITLG/SCF and KIT promote activation of PLCG1, leading to the production of the cellular signaling molecules diacylglycerol and inositol 1,4,5-trisphosphate. KITLG/SCF acts synergistically with other cytokines, probably interleukins. The protein is Kit ligand (KITLG) of Sus scrofa (Pig).